Consider the following 213-residue polypeptide: Pyridoxine/pyridoxamine 5'-phosphate oxidase (213 aa).

FMN contacts are provided by residues 60–65 (RMVLMK), 75–76 (YS), K82, and Q104. Residue K65 participates in substrate binding. Substrate contacts are provided by Y122 and R126. FMN is bound by residues 139–140 (QS) and W184. 190–192 (RLH) contacts substrate. Residue R194 participates in FMN binding.

It belongs to the pyridoxamine 5'-phosphate oxidase family. As to quaternary structure, homodimer. Requires FMN as cofactor.

It carries out the reaction pyridoxamine 5'-phosphate + O2 + H2O = pyridoxal 5'-phosphate + H2O2 + NH4(+). The enzyme catalyses pyridoxine 5'-phosphate + O2 = pyridoxal 5'-phosphate + H2O2. The protein operates within cofactor metabolism; pyridoxal 5'-phosphate salvage; pyridoxal 5'-phosphate from pyridoxamine 5'-phosphate: step 1/1. It participates in cofactor metabolism; pyridoxal 5'-phosphate salvage; pyridoxal 5'-phosphate from pyridoxine 5'-phosphate: step 1/1. Catalyzes the oxidation of either pyridoxine 5'-phosphate (PNP) or pyridoxamine 5'-phosphate (PMP) into pyridoxal 5'-phosphate (PLP). In Nitrobacter hamburgensis (strain DSM 10229 / NCIMB 13809 / X14), this protein is Pyridoxine/pyridoxamine 5'-phosphate oxidase.